The sequence spans 488 residues: Malonate-semialdehyde dehydrogenase (488 aa).

The NAD(+) site is built by A150, F152, K176, E179, R180, S229, and T251. The active-site Nucleophile is the C284. Position 382 (E382) interacts with NAD(+).

Belongs to the aldehyde dehydrogenase family. IolA subfamily. Homotetramer.

The enzyme catalyses 3-oxopropanoate + NAD(+) + CoA + H2O = hydrogencarbonate + acetyl-CoA + NADH + H(+). It catalyses the reaction 2-methyl-3-oxopropanoate + NAD(+) + CoA + H2O = propanoyl-CoA + hydrogencarbonate + NADH + H(+). The protein operates within polyol metabolism; myo-inositol degradation into acetyl-CoA; acetyl-CoA from myo-inositol: step 7/7. Catalyzes the oxidation of malonate semialdehyde (MSA) and methylmalonate semialdehyde (MMSA) into acetyl-CoA and propanoyl-CoA, respectively. Is involved in a myo-inositol catabolic pathway. Bicarbonate, and not CO2, is the end-product of the enzymatic reaction. This is Malonate-semialdehyde dehydrogenase from Listeria innocua serovar 6a (strain ATCC BAA-680 / CLIP 11262).